We begin with the raw amino-acid sequence, 346 residues long: Phosphoribosylformylglycinamidine cyclo-ligase (346 aa).

The protein belongs to the AIR synthase family.

The protein localises to the cytoplasm. It carries out the reaction 2-formamido-N(1)-(5-O-phospho-beta-D-ribosyl)acetamidine + ATP = 5-amino-1-(5-phospho-beta-D-ribosyl)imidazole + ADP + phosphate + H(+). It participates in purine metabolism; IMP biosynthesis via de novo pathway; 5-amino-1-(5-phospho-D-ribosyl)imidazole from N(2)-formyl-N(1)-(5-phospho-D-ribosyl)glycinamide: step 2/2. The polypeptide is Phosphoribosylformylglycinamidine cyclo-ligase (Bacillus anthracis (strain A0248)).